The following is a 569-amino-acid chain: Protein misato homolog 1 (569 aa).

A phosphoserine mark is found at Ser41 and Ser495.

Belongs to the misato family.

It is found in the mitochondrion outer membrane. The protein localises to the cytoplasm. Its function is as follows. Involved in the regulation of mitochondrial distribution and morphology. Required for mitochondrial fusion and mitochondrial network formation. The sequence is that of Protein misato homolog 1 (MSTO1) from Macaca fascicularis (Crab-eating macaque).